The primary structure comprises 113 residues: Tachykinin-4 (113 aa).

Positions 1 to 20 (MLPCLALLLLMELSVCTVAG) are cleaved as a signal peptide. Methionine 67 is modified (methionine amide). The propeptide occupies 71-79 (VGGRPLIQP). Leucine 95 is modified (leucine amide). A propeptide spanning residues 98–113 (RSLFTEGREDEAQGSE) is cleaved from the precursor.

It belongs to the tachykinin family. As to expression, expressed at low levels in the uterus of both pregnant and non-pregnant women. Isoform 1 is found only in the adrenal gland and fetal liver. Isoform 2 is found in heart, liver, bone marrow, prostate, adrenal gland and testis. Isoform 3 and isoform 4 are expressed predominantly in adrenal gland and placenta.

The protein localises to the secreted. Functionally, tachykinins are active peptides which excite neurons, evoke behavioral responses, are potent vasodilators and secretagogues, and contract (directly or indirectly) many smooth muscles. Endokinin-A induces thermal hyperalgesia and pain-related behavior such as scratching following intrathecal administration in rats. These effects are suppressed by treatment with endokinin-C. Endokinin-A/B reduces arterial blood pressure and increases sperm motility. The sequence is that of Tachykinin-4 from Homo sapiens (Human).